An 889-amino-acid chain; its full sequence is Disease resistance protein UNI (889 aa).

Positions 19-64 (NCLIGKSYIRTLEKNLRALQREMEDLRAIQHEVQNKVARDEARHQR) form a coiled coil. Residues 131-152 (GNFDEVSQPPPRSEVEERPTQP) form a disordered region. Residues 137-440 (SQPPPRSEVE…CEGFIGEDQV (304 aa)) enclose the NB-ARC domain. 179–186 (GMGGVGKT) provides a ligand contact to ATP. LRR repeat units follow at residues 510–532 (WGAVRKMSLMDNDIEEITCESKC), 533–555 (SELTTLFLQSNKLKNLPGAFIRY), 557–580 (QKLVVLDLSYNRDFNKLPEQISGL), 581–603 (VSLQFLDLSNTSIEHMPIGLKEL), 604–625 (KKLTFLDLTYTDRLCSISGISR), 626–652 (LLSLRLLRLLGSKVHGDASVLKELQQL), 653–676 (QNLQELAITVSAELISLDQRLAKL), 698–721 (MENLSSLRVENSYFSEIKCRESET), and 825–848 (CPKLRKLPLNATSVSKVEEFEIHM).

It belongs to the disease resistance NB-LRR family. Interacts with RPT2A.

In terms of biological role, involved in disease resistance via the salicylic acid (SA) signaling pathway. Involved in shoot architecture development via the cytokinin signaling pathway. The protein is Disease resistance protein UNI of Arabidopsis thaliana (Mouse-ear cress).